We begin with the raw amino-acid sequence, 196 residues long: Sulfur-rich protein (196 aa).

3 helical membrane passes run 34–54, 76–96, and 105–125; these read VTAGLQAITSSPGMVNLLIGW, ITLLVLGILLVVAGLACMFIF, and FWLIIPAAIGLIKLLVTSLCF.

The protein resides in the membrane. In Chlamydia pneumoniae (Chlamydophila pneumoniae), this protein is Sulfur-rich protein (srp).